The chain runs to 417 residues: Serine hydroxymethyltransferase (417 aa).

(6S)-5,6,7,8-tetrahydrofolate contacts are provided by residues leucine 121 and 125-127 (GHL). The residue at position 229 (lysine 229) is an N6-(pyridoxal phosphate)lysine. 355–357 (SPF) is a binding site for (6S)-5,6,7,8-tetrahydrofolate.

It belongs to the SHMT family. As to quaternary structure, homodimer. The cofactor is pyridoxal 5'-phosphate.

It localises to the cytoplasm. The enzyme catalyses (6R)-5,10-methylene-5,6,7,8-tetrahydrofolate + glycine + H2O = (6S)-5,6,7,8-tetrahydrofolate + L-serine. The protein operates within one-carbon metabolism; tetrahydrofolate interconversion. Its pathway is amino-acid biosynthesis; glycine biosynthesis; glycine from L-serine: step 1/1. Catalyzes the reversible interconversion of serine and glycine with tetrahydrofolate (THF) serving as the one-carbon carrier. This reaction serves as the major source of one-carbon groups required for the biosynthesis of purines, thymidylate, methionine, and other important biomolecules. Also exhibits THF-independent aldolase activity toward beta-hydroxyamino acids, producing glycine and aldehydes, via a retro-aldol mechanism. The protein is Serine hydroxymethyltransferase of Shewanella denitrificans (strain OS217 / ATCC BAA-1090 / DSM 15013).